Reading from the N-terminus, the 186-residue chain is Protein GrpE (186 aa).

The protein belongs to the GrpE family. As to quaternary structure, homodimer.

The protein localises to the cytoplasm. In terms of biological role, participates actively in the response to hyperosmotic and heat shock by preventing the aggregation of stress-denatured proteins, in association with DnaK and GrpE. It is the nucleotide exchange factor for DnaK and may function as a thermosensor. Unfolded proteins bind initially to DnaJ; upon interaction with the DnaJ-bound protein, DnaK hydrolyzes its bound ATP, resulting in the formation of a stable complex. GrpE releases ADP from DnaK; ATP binding to DnaK triggers the release of the substrate protein, thus completing the reaction cycle. Several rounds of ATP-dependent interactions between DnaJ, DnaK and GrpE are required for fully efficient folding. This is Protein GrpE from Novosphingobium aromaticivorans (strain ATCC 700278 / DSM 12444 / CCUG 56034 / CIP 105152 / NBRC 16084 / F199).